Reading from the N-terminus, the 278-residue chain is tRNA uridine(34) hydroxylase (278 aa).

The 95-residue stretch at Gln122–Ser216 folds into the Rhodanese domain. Cys176 functions as the Cysteine persulfide intermediate in the catalytic mechanism.

Belongs to the TrhO family.

It carries out the reaction uridine(34) in tRNA + AH2 + O2 = 5-hydroxyuridine(34) in tRNA + A + H2O. Its function is as follows. Catalyzes oxygen-dependent 5-hydroxyuridine (ho5U) modification at position 34 in tRNAs. In Synechocystis sp. (strain ATCC 27184 / PCC 6803 / Kazusa), this protein is tRNA uridine(34) hydroxylase.